The following is a 254-amino-acid chain: Phosphoglycerate mutase 1 (254 aa).

Substrate-binding positions include 10–17 and 23–24; these read RHGESAWN and SG. H11 (tele-phosphohistidine intermediate) is an active-site residue. Residues S14 and S23 each carry the phosphoserine modification. At Y26 the chain carries Phosphotyrosine. The residue at position 31 (S31) is a Phosphoserine. Substrate contacts are provided by residues R62, 89–92, and K100; that span reads ERHY. E89 functions as the Proton donor/acceptor in the catalytic mechanism. K106 is modified (N6-acetyllysine). 116–117 lines the substrate pocket; the sequence is RR. Position 118 is a phosphoserine (S118). 187–188 contacts substrate; sequence GN. An N6-acetyllysine; alternate modification is found at K251. K251 is subject to N6-succinyllysine; alternate. K253 and K254 each carry N6-acetyllysine.

This sequence belongs to the phosphoglycerate mutase family. BPG-dependent PGAM subfamily. Homodimer. In terms of processing, acetylated at Lys-253, Lys-253 and Lys-254 under high glucose condition. Acetylation increases catalytic activity. Under glucose restriction SIRT1 levels dramatically increase and it deacetylates the enzyme.

The catalysed reaction is (2R)-2-phosphoglycerate = (2R)-3-phosphoglycerate. It carries out the reaction (2R)-3-phospho-glyceroyl phosphate = (2R)-2,3-bisphosphoglycerate + H(+). Functionally, catalyzes the interconversion of 2-phosphoglycerate and 3-phosphoglyceratea crucial step in glycolysis, by using 2,3-bisphosphoglycerate. Also catalyzes the interconversion of (2R)-2,3-bisphosphoglycerate and (2R)-3-phospho-glyceroyl phosphate. This chain is Phosphoglycerate mutase 1, found in Mus musculus (Mouse).